We begin with the raw amino-acid sequence, 260 residues long: Beta-lactamase SHV-6 (260 aa).

The signal sequence occupies residues 1–11 (LLATLPLAVHA). Catalysis depends on Ser-56, which acts as the Acyl-ester intermediate. Cysteines 63 and 109 form a disulfide. Catalysis depends on Glu-154, which acts as the Proton acceptor. 220-222 (KTG) provides a ligand contact to substrate.

The protein belongs to the class-A beta-lactamase family.

The catalysed reaction is a beta-lactam + H2O = a substituted beta-amino acid. Its function is as follows. SHV enzymes hydrolyze broad spectrum cephalosporins notably cefotaxime and ceftazidime. This is Beta-lactamase SHV-6 (bla) from Klebsiella pneumoniae.